The primary structure comprises 172 residues: VQ motif-containing protein 17 (172 aa).

Positions 51–60 match the VQ motif; sequence FREIVQNLTG. Residues 60–97 form a disordered region; the sequence is GKQDHHHHDLPHQKGLKRNPRSRRSHDHHEVHDMNKSH. Residues 61 to 71 show a composition bias toward basic and acidic residues; the sequence is KQDHHHHDLPH. Basic residues predominate over residues 72 to 85; sequence QKGLKRNPRSRRSH. Residues 86-95 are compositionally biased toward basic and acidic residues; it reads DHHEVHDMNK.

It localises to the nucleus. Functionally, may function as positive regulator of plant growth. In Arabidopsis thaliana (Mouse-ear cress), this protein is VQ motif-containing protein 17.